Reading from the N-terminus, the 690-residue chain is Translation initiation factor IF-2 (690 aa).

The region spanning 178 to 346 (PRPPVVTVMG…MILLVAEMNE (169 aa)) is the tr-type G domain. A G1 region spans residues 187-194 (GHVDHGKT). 187–194 (GHVDHGKT) contacts GTP. The segment at 212–216 (GITQS) is G2. The interval 233-236 (DTPG) is G3. GTP is bound by residues 233-237 (DTPGH) and 287-290 (NKID). The interval 287 to 290 (NKID) is G4. Residues 324-326 (SAR) are G5.

The protein belongs to the TRAFAC class translation factor GTPase superfamily. Classic translation factor GTPase family. IF-2 subfamily.

It localises to the cytoplasm. One of the essential components for the initiation of protein synthesis. Protects formylmethionyl-tRNA from spontaneous hydrolysis and promotes its binding to the 30S ribosomal subunits. Also involved in the hydrolysis of GTP during the formation of the 70S ribosomal complex. The protein is Translation initiation factor IF-2 of Thermotoga sp. (strain RQ2).